A 426-amino-acid polypeptide reads, in one-letter code: 3-phosphoshikimate 1-carboxyvinyltransferase (426 aa).

Positions 22, 23, and 27 each coordinate 3-phosphoshikimate. Residue lysine 22 coordinates phosphoenolpyruvate. The phosphoenolpyruvate site is built by glycine 96 and arginine 124. 3-phosphoshikimate is bound by residues serine 170, serine 171, glutamine 172, serine 198, aspartate 314, asparagine 337, and lysine 341. Residue glutamine 172 participates in phosphoenolpyruvate binding. The Proton acceptor role is filled by aspartate 314. Phosphoenolpyruvate is bound by residues arginine 345, arginine 387, and lysine 412.

This sequence belongs to the EPSP synthase family. In terms of assembly, monomer.

It is found in the cytoplasm. The enzyme catalyses 3-phosphoshikimate + phosphoenolpyruvate = 5-O-(1-carboxyvinyl)-3-phosphoshikimate + phosphate. It functions in the pathway metabolic intermediate biosynthesis; chorismate biosynthesis; chorismate from D-erythrose 4-phosphate and phosphoenolpyruvate: step 6/7. Functionally, catalyzes the transfer of the enolpyruvyl moiety of phosphoenolpyruvate (PEP) to the 5-hydroxyl of shikimate-3-phosphate (S3P) to produce enolpyruvyl shikimate-3-phosphate and inorganic phosphate. The chain is 3-phosphoshikimate 1-carboxyvinyltransferase from Shewanella baltica (strain OS195).